We begin with the raw amino-acid sequence, 200 residues long: H-2 class I histocompatibility antigen, Q9 alpha chain (200 aa).

Positions methionine 1–alanine 21 are cleaved as a signal peptide. Positions glycine 22 to glycine 111 are alpha-1. At glycine 22–leucine 200 the chain is on the extracellular side. Asparagine 107 carries N-linked (GlcNAc...) asparagine glycosylation. An alpha-2 region spans residues glycine 112 to leucine 200. The cysteines at positions 122 and 185 are disulfide-linked.

This sequence belongs to the MHC class I family. In terms of assembly, heterodimer of an alpha chain and a beta chain (beta-2-microglobulin).

The protein resides in the membrane. Involved in the presentation of foreign antigens to the immune system. This chain is H-2 class I histocompatibility antigen, Q9 alpha chain (H2-Q9), found in Mus musculus (Mouse).